Here is a 240-residue protein sequence, read N- to C-terminus: UDP-2,3-diacylglucosamine hydrolase (240 aa).

Mn(2+)-binding residues include D8, H10, D41, N78, and H113. 78–79 (NR) is a substrate binding site. Positions 121, 159, 163, 166, and 194 each coordinate substrate. Positions 194 and 196 each coordinate Mn(2+).

This sequence belongs to the LpxH family. Mn(2+) serves as cofactor.

It is found in the cell inner membrane. It carries out the reaction UDP-2-N,3-O-bis[(3R)-3-hydroxytetradecanoyl]-alpha-D-glucosamine + H2O = 2-N,3-O-bis[(3R)-3-hydroxytetradecanoyl]-alpha-D-glucosaminyl 1-phosphate + UMP + 2 H(+). The protein operates within glycolipid biosynthesis; lipid IV(A) biosynthesis; lipid IV(A) from (3R)-3-hydroxytetradecanoyl-[acyl-carrier-protein] and UDP-N-acetyl-alpha-D-glucosamine: step 4/6. In terms of biological role, hydrolyzes the pyrophosphate bond of UDP-2,3-diacylglucosamine to yield 2,3-diacylglucosamine 1-phosphate (lipid X) and UMP by catalyzing the attack of water at the alpha-P atom. Involved in the biosynthesis of lipid A, a phosphorylated glycolipid that anchors the lipopolysaccharide to the outer membrane of the cell. This chain is UDP-2,3-diacylglucosamine hydrolase, found in Shewanella baltica (strain OS223).